Reading from the N-terminus, the 69-residue chain is MGKQCEFCGKKPQTGNNVSHSNIKTKRRFMPNLQSARHQLPTGQIKTVSVCTRCLRSGAVVKPVVKKTA.

The protein belongs to the bacterial ribosomal protein bL28 family.

This is Large ribosomal subunit protein bL28 from Oleidesulfovibrio alaskensis (strain ATCC BAA-1058 / DSM 17464 / G20) (Desulfovibrio alaskensis).